Reading from the N-terminus, the 536-residue chain is Thiamine transport system permease protein ThiP (536 aa).

12 consecutive transmembrane segments (helical) span residues 12–32 (WLIP…AAFL), 58–78 (FSFW…IFLA), 95–115 (LCAM…LSVY), 134–154 (FSPY…LPMA), 199–219 (VAAL…SLGG), 240–260 (PARA…LVLL), 293–313 (VLIV…IVDG), 334–354 (SLRI…MLLW), 374–394 (SGML…FLLL), 404–424 (ADGI…LKVL), 463–483 (AQAL…VALF), and 506–526 (DGAV…TVIE). The ABC transmembrane type-1 1 domain maps to 56–261 (VRFSFWQAFL…VCCLGLVLLS (206 aa)). One can recognise an ABC transmembrane type-1 2 domain in the interval 331–525 (LWTSLRIALA…LLCFLLFTVI (195 aa)).

This sequence belongs to the binding-protein-dependent transport system permease family. CysTW subfamily. The complex is composed of two ATP-binding proteins (ThiQ), two transmembrane proteins (ThiP) and a solute-binding protein (ThiB).

It localises to the cell inner membrane. With respect to regulation, transport is inhibited by the sulfhydryl-specific modifier N-ethylmaleimide. Part of the ABC transporter complex ThiBPQ involved in thiamine import. Probably responsible for the translocation of the substrate across the membrane. The sequence is that of Thiamine transport system permease protein ThiP (thiP) from Escherichia coli (strain K12).